Reading from the N-terminus, the 211-residue chain is Arginine exporter protein ArgO (211 aa).

6 consecutive transmembrane segments (helical) span residues Met1–Pro21, Leu37–Gly57, Leu68–Leu88, Ile111–Val131, Trp147–Ala167, and Ala179–Ala199.

The protein belongs to the LysE/ArgO transporter (TC 2.A.75) family.

It is found in the cell inner membrane. The enzyme catalyses L-arginine(in) = L-arginine(out). Functionally, involved in the export of arginine. Important to control the intracellular level of arginine and the correct balance between arginine and lysine. The polypeptide is Arginine exporter protein ArgO (Salmonella choleraesuis (strain SC-B67)).